Reading from the N-terminus, the 146-residue chain is Kappa-casein (146 aa).

O-linked (GalNAc...) threonine glycans are attached at residues threonine 97, threonine 107, threonine 112, and threonine 118. Phosphothreonine is present on threonine 121. Position 125 is a phosphoserine; alternate (serine 125). Serine 125 carries an O-linked (GalNAc...) serine; alternate glycan. The O-linked (GalNAc...) threonine glycan is linked to threonine 142. The residue at position 143 (serine 143) is a Phosphoserine.

It belongs to the kappa-casein family. In terms of tissue distribution, mammary gland specific. Secreted in milk.

It localises to the secreted. In terms of biological role, kappa-casein stabilizes micelle formation, preventing casein precipitation in milk. The sequence is that of Kappa-casein (CSN3) from Panthera uncia (Snow leopard).